A 154-amino-acid polypeptide reads, in one-letter code: MYRMQLLSCIALSLALITNSAPTSSSTKKTQLQLEHLLLDLQMLLNGINNYKNPKLTRMLTFKFYLPKKATELKHLQCLEEELKPLEEVLNLAQSKNFHLRDTRDIISNINVLVLELKGSETTFTCEYDDDTATIIEFLNGWITFCQSIISTLT.

Positions 1 to 20 (MYRMQLLSCIALSLALITNS) are cleaved as a signal peptide. O-linked (GalNAc...) threonine glycosylation is present at T23. An intrachain disulfide couples C78 to C126.

The protein belongs to the IL-2 family.

The protein localises to the secreted. Functionally, cytokine produced by activated CD4-positive helper T-cells and to a lesser extend activated CD8-positive T-cells and natural killer (NK) cells that plays pivotal roles in the immune response and tolerance. Binds to a receptor complex composed of either the high-affinity trimeric IL-2R (IL2RA/CD25, IL2RB/CD122 and IL2RG/CD132) or the low-affinity dimeric IL-2R (IL2RB and IL2RG). Interaction with the receptor leads to oligomerization and conformation changes in the IL-2R subunits resulting in downstream signaling starting with phosphorylation of JAK1 and JAK3. In turn, JAK1 and JAK3 phosphorylate the receptor to form a docking site leading to the phosphorylation of several substrates including STAT5. This process leads to activation of several pathways including STAT, phosphoinositide-3-kinase/PI3K and mitogen-activated protein kinase/MAPK pathways. Functions as a T-cell growth factor and can increase NK-cell cytolytic activity as well. Promotes strong proliferation of activated B-cells and subsequently immunoglobulin production. Plays a pivotal role in regulating the adaptive immune system by controlling the survival and proliferation of regulatory T-cells, which are required for the maintenance of immune tolerance. Moreover, participates in the differentiation and homeostasis of effector T-cell subsets, including Th1, Th2, Th17 as well as memory CD8-positive T-cells. This is Interleukin-2 (IL2) from Saimiri sciureus (Common squirrel monkey).